We begin with the raw amino-acid sequence, 354 residues long: 3-isopropylmalate dehydrogenase (354 aa).

76–87 (GPRWDSAKERPE) is an NAD(+) binding site. The substrate site is built by Arg94, Arg104, Arg130, and Asp215. Mg(2+)-binding residues include Asp215, Asp239, and Asp243. 273 to 285 (GSAPDIAGKNKAN) lines the NAD(+) pocket.

The protein belongs to the isocitrate and isopropylmalate dehydrogenases family. LeuB type 1 subfamily. As to quaternary structure, homodimer. The cofactor is Mg(2+). Mn(2+) is required as a cofactor.

The protein resides in the cytoplasm. The catalysed reaction is (2R,3S)-3-isopropylmalate + NAD(+) = 4-methyl-2-oxopentanoate + CO2 + NADH. It participates in amino-acid biosynthesis; L-leucine biosynthesis; L-leucine from 3-methyl-2-oxobutanoate: step 3/4. Functionally, catalyzes the oxidation of 3-carboxy-2-hydroxy-4-methylpentanoate (3-isopropylmalate) to 3-carboxy-4-methyl-2-oxopentanoate. The product decarboxylates to 4-methyl-2 oxopentanoate. In Bacillus cereus (strain ATCC 10987 / NRS 248), this protein is 3-isopropylmalate dehydrogenase.